Here is a 401-residue protein sequence, read N- to C-terminus: Short chain dehydrogenase/reductase dpchH (401 aa).

Asn-16 is a glycosylation site (N-linked (GlcNAc...) asparagine). A helical transmembrane segment spans residues 51 to 71 (VRAVDVLFGTFLYVPLGILFL). Residues 72–80 (KKSLSGFGD), 99–100 (TG), and 118–120 (AKV) each bind NAD(+). An N-linked (GlcNAc...) asparagine glycan is attached at Asn-242. The active-site Proton acceptor is Tyr-275. NAD(+) contacts are provided by residues 275–279 (YGTSK) and 308–310 (GTI). Asn-386 carries an N-linked (GlcNAc...) asparagine glycan.

Its subcellular location is the membrane. The protein operates within secondary metabolite biosynthesis; terpenoid biosynthesis. Short chain dehydrogenase/reductase; part of the gene cluster that mediates the biosynthesis of the diterpenoid pyrones higginsianins A and B. The first step of the pathway is the synthesis of the alpha-pyrone moiety by the polyketide synthase dpchA via condensation of one acetyl-CoA starter unit with 3 malonyl-CoA units and 2 methylations. The alpha-pyrone is then combined with geranylgeranyl pyrophosphate (GGPP) formed by the GGPP synthase dpchD through the action of the prenyltransferase dpchC to yield a linear alpha-pyrone diterpenoid. Subsequent steps in the diterpenoid pyrone biosynthetic pathway involve the decalin core formation, which is initiated by the epoxidation of the C10-C11 olefin by the FAD-dependent oxidoreductase dpchE, and is followed by a cyclization cascade catalyzed by the terpene cyclase dpchB. The short chain dehydrogenase/reductase dpchG then oxidizes the 8S hydroxy group to a ketone and the short chain dehydrogenase/reductase dpchH reduces the ketone to the 8R hydroxy group to yield higginsianin B. Finally, the FAD-dependent oxidoreductase dpchF converts higginsianin B into higginsianin A. In Colletotrichum higginsianum (strain IMI 349063) (Crucifer anthracnose fungus), this protein is Short chain dehydrogenase/reductase dpchH.